The primary structure comprises 466 residues: Amidase (466 aa).

Catalysis depends on charge relay system residues Lys-79 and Ser-148. Positions 128–152 (YGRITPKSRNPRDPGRTPGGSSGGS) are disordered. Ser-172 acts as the Acyl-ester intermediate in catalysis.

This sequence belongs to the amidase family.

It catalyses the reaction a monocarboxylic acid amide + H2O = a monocarboxylate + NH4(+). This is Amidase from Pseudomonas putida (Arthrobacter siderocapsulatus).